Reading from the N-terminus, the 547-residue chain is MFS-type transporter ltbE (547 aa).

The disordered stretch occupies residues 1 to 23; the sequence is MEIAAETTGPAGVTTDVTNAEES. 13 helical membrane-spanning segments follow: residues 33-53, 74-94, 104-124, 135-155, 165-185, 195-215, 240-260, 267-287, 310-330, 343-363, 370-390, 399-419, and 432-452; these read QGWA…VLAI, DIGW…PTCG, WVYC…AVAP, ISGL…SYCV, PIVL…GGSI, FIFW…WFTL, ATLL…GGIV, KVFG…CLQW, GFMM…PIYF, INLL…GSLA, VPFM…YQLV, WIGF…MPIL, and TGLV…PSVG. An N-linked (GlcNAc...) asparagine glycan is attached at N463. A helical transmembrane segment spans residues 506–526; sequence VFWVGVATPALAWIASWAMEW.

The protein belongs to the major facilitator superfamily. TCR/Tet family.

The protein resides in the cell membrane. In terms of biological role, MFS-type transporter; part of the gene cluster that mediates the biosynthesis of luteodienoside A, a glycosylated polyketide consisting of an unusual 1-O-beta-D-glucopyranosyl-myo-inositol (glucinol) ester of 3-hydroxy-2,2,4-trimethylocta-4,6-dienoic acid. LtbE is probably involved in the secretion of luteodienoside A. This is MFS-type transporter ltbE from Aspergillus luteorubrus.